We begin with the raw amino-acid sequence, 27 residues long: uncharacterized protein (27 aa).

It localises to the plastid. The protein localises to the chloroplast. This is an uncharacterized protein from Anthoceros angustus (Hornwort).